A 312-amino-acid polypeptide reads, in one-letter code: Ribosomal RNA small subunit methyltransferase H (312 aa).

S-adenosyl-L-methionine contacts are provided by residues 33–35, D53, F80, D101, and Q108; that span reads SGH.

Belongs to the methyltransferase superfamily. RsmH family.

The protein localises to the cytoplasm. It carries out the reaction cytidine(1402) in 16S rRNA + S-adenosyl-L-methionine = N(4)-methylcytidine(1402) in 16S rRNA + S-adenosyl-L-homocysteine + H(+). Specifically methylates the N4 position of cytidine in position 1402 (C1402) of 16S rRNA. In Desulforapulum autotrophicum (strain ATCC 43914 / DSM 3382 / VKM B-1955 / HRM2) (Desulfobacterium autotrophicum), this protein is Ribosomal RNA small subunit methyltransferase H.